Reading from the N-terminus, the 173-residue chain is Translation initiation factor IF-3 (173 aa).

Belongs to the IF-3 family. As to quaternary structure, monomer.

It localises to the cytoplasm. In terms of biological role, IF-3 binds to the 30S ribosomal subunit and shifts the equilibrium between 70S ribosomes and their 50S and 30S subunits in favor of the free subunits, thus enhancing the availability of 30S subunits on which protein synthesis initiation begins. The sequence is that of Translation initiation factor IF-3 from Ehrlichia chaffeensis (strain ATCC CRL-10679 / Arkansas).